Consider the following 161-residue polypeptide: SsrA-binding protein (161 aa).

Residues 137–161 form a disordered region; sequence HDKRTDSKEKDWNRDKARIMKSSLR. Residues 139 to 154 are compositionally biased toward basic and acidic residues; that stretch reads KRTDSKEKDWNRDKAR.

It belongs to the SmpB family.

It is found in the cytoplasm. Required for rescue of stalled ribosomes mediated by trans-translation. Binds to transfer-messenger RNA (tmRNA), required for stable association of tmRNA with ribosomes. tmRNA and SmpB together mimic tRNA shape, replacing the anticodon stem-loop with SmpB. tmRNA is encoded by the ssrA gene; the 2 termini fold to resemble tRNA(Ala) and it encodes a 'tag peptide', a short internal open reading frame. During trans-translation Ala-aminoacylated tmRNA acts like a tRNA, entering the A-site of stalled ribosomes, displacing the stalled mRNA. The ribosome then switches to translate the ORF on the tmRNA; the nascent peptide is terminated with the 'tag peptide' encoded by the tmRNA and targeted for degradation. The ribosome is freed to recommence translation, which seems to be the essential function of trans-translation. In Aliivibrio salmonicida (strain LFI1238) (Vibrio salmonicida (strain LFI1238)), this protein is SsrA-binding protein.